Consider the following 31-residue polypeptide: Cycloviolin-A (31 aa).

Positions 1 to 31 (GVIPCGESCVFIPCISAAIGCSCKNKVCYRN) form a cross-link, cyclopeptide (Gly-Asn). Intrachain disulfides connect Cys-5–Cys-21, Cys-9–Cys-23, and Cys-14–Cys-28.

Post-translationally, this is a cyclic peptide.

In terms of biological role, probably participates in a plant defense mechanism. Has anti-HIV activity. This Leonia cymosa (Sacha uba) protein is Cycloviolin-A.